We begin with the raw amino-acid sequence, 198 residues long: NAD(P)H dehydrogenase (quinone) (198 aa).

Residues 4–190 enclose the Flavodoxin-like domain; sequence ILVLYYSMYG…ILASFQGAHV (187 aa). FMN contacts are provided by residues 10–15 and 79–81; these read SMYGHI and TRF. NAD(+) is bound at residue Y12. Residue W99 participates in substrate binding. FMN contacts are provided by residues 114–119 and H134; that span reads STGTGG.

Belongs to the WrbA family. FMN serves as cofactor.

The catalysed reaction is a quinone + NADH + H(+) = a quinol + NAD(+). The enzyme catalyses a quinone + NADPH + H(+) = a quinol + NADP(+). The sequence is that of NAD(P)H dehydrogenase (quinone) from Azotobacter vinelandii (strain DJ / ATCC BAA-1303).